The chain runs to 431 residues: Argininosuccinate lyase (431 aa).

This sequence belongs to the lyase 1 family. Argininosuccinate lyase subfamily.

Its subcellular location is the cytoplasm. It carries out the reaction 2-(N(omega)-L-arginino)succinate = fumarate + L-arginine. The protein operates within amino-acid biosynthesis; L-arginine biosynthesis; L-arginine from L-ornithine and carbamoyl phosphate: step 3/3. The polypeptide is Argininosuccinate lyase (Stenotrophomonas maltophilia (strain R551-3)).